The following is a 418-amino-acid chain: CCA-adding enzyme (418 aa).

Positions 54 and 57 each coordinate ATP. The CTP site is built by Ser54 and Arg57. Residues Asp66, Asp68, and Asp118 each contribute to the Mg(2+) site. His141, Lys161, and Tyr170 together coordinate ATP. The CTP site is built by His141, Lys161, and Tyr170.

The protein belongs to the tRNA nucleotidyltransferase/poly(A) polymerase family. Archaeal CCA-adding enzyme subfamily. As to quaternary structure, homodimer. Mg(2+) serves as cofactor.

It carries out the reaction a tRNA precursor + 2 CTP + ATP = a tRNA with a 3' CCA end + 3 diphosphate. The enzyme catalyses a tRNA with a 3' CCA end + 2 CTP + ATP = a tRNA with a 3' CCACCA end + 3 diphosphate. In terms of biological role, catalyzes the addition and repair of the essential 3'-terminal CCA sequence in tRNAs without using a nucleic acid template. Adds these three nucleotides in the order of C, C, and A to the tRNA nucleotide-73, using CTP and ATP as substrates and producing inorganic pyrophosphate. tRNA 3'-terminal CCA addition is required both for tRNA processing and repair. Also involved in tRNA surveillance by mediating tandem CCA addition to generate a CCACCA at the 3' terminus of unstable tRNAs. While stable tRNAs receive only 3'-terminal CCA, unstable tRNAs are marked with CCACCA and rapidly degraded. The polypeptide is CCA-adding enzyme (Pyrobaculum islandicum (strain DSM 4184 / JCM 9189 / GEO3)).